Reading from the N-terminus, the 264-residue chain is Tropomyosin Cha f 1.0101 (264 aa).

Methionine 1 is subject to N-acetylmethionine. 2 disordered regions span residues 1–56 and 92–126; these read MDAI…VENE and IQLPEEDLERSEERLNTATTKLAEASQAADESERM. Residues 1 to 264 adopt a coiled-coil conformation; that stretch reads MDAIKKKMQA…RLEDELVNEK (264 aa). Basic and acidic residues predominate over residues 12 to 45; the sequence is KLEKDNAMDRADTLEQQNKEANLRAEKTEEEIRA.

The protein belongs to the tropomyosin family. As to quaternary structure, homodimer. In terms of tissue distribution, expressed in muscle (at protein level). Expressed in claw muscles.

Functionally, tropomyosin, in association with the troponin complex, plays a central role in the calcium dependent regulation of muscle contraction. In Charybdis feriata (Crucifix crab), this protein is Tropomyosin Cha f 1.0101.